The sequence spans 142 residues: Large ribosomal subunit protein uL11 (142 aa).

Belongs to the universal ribosomal protein uL11 family. Part of the ribosomal stalk of the 50S ribosomal subunit. Interacts with L10 and the large rRNA to form the base of the stalk. L10 forms an elongated spine to which L12 dimers bind in a sequential fashion forming a multimeric L10(L12)X complex. One or more lysine residues are methylated.

Its function is as follows. Forms part of the ribosomal stalk which helps the ribosome interact with GTP-bound translation factors. The protein is Large ribosomal subunit protein uL11 of Klebsiella pneumoniae subsp. pneumoniae (strain ATCC 700721 / MGH 78578).